A 68-amino-acid polypeptide reads, in one-letter code: Large ribosomal subunit protein uL29 (68 aa).

This sequence belongs to the universal ribosomal protein uL29 family.

This Chlorobaculum parvum (strain DSM 263 / NCIMB 8327) (Chlorobium vibrioforme subsp. thiosulfatophilum) protein is Large ribosomal subunit protein uL29.